The following is a 117-amino-acid chain: Large ribosomal subunit protein bL20 (117 aa).

The protein belongs to the bacterial ribosomal protein bL20 family.

Binds directly to 23S ribosomal RNA and is necessary for the in vitro assembly process of the 50S ribosomal subunit. It is not involved in the protein synthesizing functions of that subunit. This Carboxydothermus hydrogenoformans (strain ATCC BAA-161 / DSM 6008 / Z-2901) protein is Large ribosomal subunit protein bL20.